The chain runs to 244 residues: 5-oxoprolinase subunit A (244 aa).

Belongs to the LamB/PxpA family. Forms a complex composed of PxpA, PxpB and PxpC.

It carries out the reaction 5-oxo-L-proline + ATP + 2 H2O = L-glutamate + ADP + phosphate + H(+). Functionally, catalyzes the cleavage of 5-oxoproline to form L-glutamate coupled to the hydrolysis of ATP to ADP and inorganic phosphate. The protein is 5-oxoprolinase subunit A of Shigella flexneri serotype 5b (strain 8401).